We begin with the raw amino-acid sequence, 520 residues long: Fusaridione A cluster transcription factor fsdR (520 aa).

The tract at residues 1–30 (MSTGPPSGISLVSMTTPRKSGQHTPESWSK) is disordered.

It is found in the nucleus. Functionally, transcription factor that regulates the expression of the gene cluster that mediates the biosynthesis of fusaridione A. This is Fusaridione A cluster transcription factor fsdR from Fusarium heterosporum.